We begin with the raw amino-acid sequence, 261 residues long: tRNA pseudouridine synthase A (261 aa).

Residue Asp-51 is the Nucleophile of the active site. Tyr-109 is a binding site for substrate.

Belongs to the tRNA pseudouridine synthase TruA family. As to quaternary structure, homodimer.

It carries out the reaction uridine(38/39/40) in tRNA = pseudouridine(38/39/40) in tRNA. In terms of biological role, formation of pseudouridine at positions 38, 39 and 40 in the anticodon stem and loop of transfer RNAs. The polypeptide is tRNA pseudouridine synthase A (Shewanella woodyi (strain ATCC 51908 / MS32)).